The primary structure comprises 471 residues: Nuclear distribution protein PAC1 (471 aa).

Positions 9-41 (QAEELHKSMIAYLLSVNLSKSAAALREELADSV) constitute a LisH domain. A coiled-coil region spans residues 60–87 (TSVVRLQKKIMDLESRNAALQQELDSAT). Polar residues predominate over residues 83 to 93 (LDSATPTSLSR). The tract at residues 83-108 (LDSATPTSLSRRNQDPASWLPRAPAR) is disordered. WD repeat units follow at residues 113–154 (SHRG…RTIK), 156–196 (HTRA…KNIR), 200–247 (GHDH…CVKT), 250–289 (GHLD…TKST), 292–352 (GHEH…IKTL), 354–393 (GHDN…KCVR), 398–428 (AHGH…INGQ), and 429–467 (GTPS…MNVR). The disordered stretch occupies residues 424 to 449 (GINGQGTPSMNGVSISTTSKKEDTGG). The span at 428-441 (QGTPSMNGVSISTT) shows a compositional bias: polar residues.

Belongs to the WD repeat LIS1/nudF family. Self-associates. Interacts with NDL1 and dynein.

The protein resides in the cytoplasm. The protein localises to the cytoskeleton. It is found in the spindle pole. Its function is as follows. Positively regulates the activity of the minus-end directed microtubule motor protein dynein. May enhance dynein-mediated microtubule sliding by targeting dynein to the microtubule plus end. Required for nuclear migration during vegetative growth as well as development. Required for retrograde early endosome (EE) transport from the hyphal tip. Required for localization of dynein to the mitotic spindle poles. Recruits additional proteins to the dynein complex at SPBs. The protein is Nuclear distribution protein PAC1 of Coccidioides posadasii (strain C735) (Valley fever fungus).